Reading from the N-terminus, the 666-residue chain is Putative cysteine-rich receptor-like protein kinase 20 (666 aa).

The N-terminal stretch at 1–23 (MSSLICFIFLFLFSFITSFTASA) is a signal peptide. Residues 24-264 (QNPFYLYHNC…PRPGKGGNSS (241 aa)) are Extracellular-facing. Gnk2-homologous domains follow at residues 27–131 (FYLY…NRNI) and 137–241 (TDGG…NYEF). N-linked (GlcNAc...) asparagine glycans are attached at residues Asn32, Asn42, Asn60, Asn69, and Asn103. A glycan (N-linked (GlcNAc...) asparagine) is linked at Asn262. The chain crosses the membrane as a helical span at residues 265 to 285 (VIVIAVVVPITVLFLLFVAFF). Topologically, residues 286 to 666 (SVRRAKRKKT…EASITSVAPR (381 aa)) are cytoplasmic. One can recognise a Protein kinase domain in the interval 344-623 (FLPINKLGQG…QMLTTSSIAL (280 aa)). ATP-binding positions include 350–358 (LGQGGFGEV) and Lys372. Tyr417 carries the phosphotyrosine modification. The active-site Proton acceptor is Asp469. Phosphothreonine is present on Thr509. Tyr517 is subject to Phosphotyrosine.

The protein belongs to the protein kinase superfamily. Ser/Thr protein kinase family. CRK subfamily.

Its subcellular location is the membrane. The catalysed reaction is L-seryl-[protein] + ATP = O-phospho-L-seryl-[protein] + ADP + H(+). It carries out the reaction L-threonyl-[protein] + ATP = O-phospho-L-threonyl-[protein] + ADP + H(+). This is Putative cysteine-rich receptor-like protein kinase 20 (CRK20) from Arabidopsis thaliana (Mouse-ear cress).